The following is a 185-amino-acid chain: Mu-like prophage FluMu protein gp16 (185 aa).

This sequence to phage Mu protein gp16.

This is Mu-like prophage FluMu protein gp16 from Haemophilus influenzae (strain ATCC 51907 / DSM 11121 / KW20 / Rd).